The following is a 158-amino-acid chain: S-ribosylhomocysteine lyase (158 aa).

Positions 56, 60, and 125 each coordinate Fe cation.

Belongs to the LuxS family. As to quaternary structure, homodimer. Requires Fe cation as cofactor.

It catalyses the reaction S-(5-deoxy-D-ribos-5-yl)-L-homocysteine = (S)-4,5-dihydroxypentane-2,3-dione + L-homocysteine. Involved in the synthesis of autoinducer 2 (AI-2) which is secreted by bacteria and is used to communicate both the cell density and the metabolic potential of the environment. The regulation of gene expression in response to changes in cell density is called quorum sensing. Catalyzes the transformation of S-ribosylhomocysteine (RHC) to homocysteine (HC) and 4,5-dihydroxy-2,3-pentadione (DPD). This is S-ribosylhomocysteine lyase from Leuconostoc citreum (strain KM20).